Consider the following 120-residue polypeptide: Large ribosomal subunit protein uL14 (120 aa).

Belongs to the universal ribosomal protein uL14 family. As to quaternary structure, part of the 50S ribosomal subunit. Forms a cluster with proteins L3 and L19. In the 70S ribosome, L14 and L19 interact and together make contacts with the 16S rRNA in bridges B5 and B8.

In terms of biological role, binds to 23S rRNA. Forms part of two intersubunit bridges in the 70S ribosome. The sequence is that of Large ribosomal subunit protein uL14 from Karelsulcia muelleri (strain GWSS) (Sulcia muelleri).